The sequence spans 116 residues: MGKDTIADIITSIRNADMNKKGTVRIASTNITENIVKILLREGFIENVRKHQEGNKYFLVSTLRHRKTRKRIHRTILKRISRPGLRIYSDYQQIPKILGGIGIVILSTYPRYNDRS.

Belongs to the universal ribosomal protein uS8 family. In terms of assembly, part of the 30S ribosomal subunit.

Its subcellular location is the plastid. It is found in the chloroplast. One of the primary rRNA binding proteins, it binds directly to 16S rRNA central domain where it helps coordinate assembly of the platform of the 30S subunit. The protein is Small ribosomal subunit protein uS8c (rps8) of Musa acuminata (Banana).